Consider the following 41-residue polypeptide: Alpha-conotoxin-like Pu1.2 (41 aa).

A propeptide spanning residues 1 to 21 is cleaved from the precursor; it reads LDGRNAAADFETSDLLAMTIR. 2 disulfides stabilise this stretch: Cys-24–Cys-30 and Cys-25–Cys-37. At Cys-37 the chain carries Cysteine amide. Positions 38 to 41 are excised as a propeptide; that stretch reads GGKR.

Belongs to the conotoxin A superfamily. In terms of processing, non-native isomers 'ribbon' (with disulfide connectivity C1-C4, C2-C3) and 'beads' (with disulfide connectivity C1-C2, C3-C4) also inhibit high voltage-activated (HVA) calcium channel currents in rat DRG neurons (25-30% inhibition at 1 uM toxin). Post-translationally, mutants Pu1.2(9-16), [C3S; C9S]Pu1.2 and [C4S]Pu1.2(1-9) are all C-terminally amidated. In terms of tissue distribution, expressed by the venom duct.

The protein resides in the secreted. In terms of biological role, alpha-conotoxins act on postsynaptic membranes, they bind to the nicotinic acetylcholine receptors (nAChR) and thus inhibit them. This toxin also inhibits high voltage-activated (HVA) calcium channel currents in rat DRG neurons (27% inhibition at 1 uM toxin) probably by activating GABA(B) receptors (GABBR1 and/or GABBR2). The chain is Alpha-conotoxin-like Pu1.2 from Conus pulicarius (Flea-bitten cone).